Reading from the N-terminus, the 395-residue chain is Elongation factor Tu (395 aa).

Residues 10-204 enclose the tr-type G domain; that stretch reads LPHVNIGTIG…AVDEYIPTPQ (195 aa). The interval 19–26 is G1; it reads GHVDHGKT. 19–26 is a binding site for GTP; that stretch reads GHVDHGKT. Threonine 26 contributes to the Mg(2+) binding site. The G2 stretch occupies residues 60-64; the sequence is GITIN. Residues 81–84 form a G3 region; the sequence is DCPG. GTP-binding positions include 81–85 and 136–139; these read DCPGH and NKCD. Residues 136 to 139 are G4; sequence NKCD. A G5 region spans residues 174 to 176; that stretch reads SAL.

It belongs to the TRAFAC class translation factor GTPase superfamily. Classic translation factor GTPase family. EF-Tu/EF-1A subfamily. Monomer.

The protein localises to the cytoplasm. The catalysed reaction is GTP + H2O = GDP + phosphate + H(+). GTP hydrolase that promotes the GTP-dependent binding of aminoacyl-tRNA to the A-site of ribosomes during protein biosynthesis. This is Elongation factor Tu from Mycoplasma capricolum subsp. capricolum (strain California kid / ATCC 27343 / NCTC 10154).